Here is a 205-residue protein sequence, read N- to C-terminus: Molybdopterin synthase catalytic subunit (205 aa).

The disordered stretch occupies residues 1–36 (MQHPTLQPEVDPNPVVSSSSSSSSSNPLPAHLNPAN). Substrate is bound by residues 146-147 (HR), Lys162, and 169-171 (KRE). The disordered stretch occupies residues 179-205 (GEGEGEWRANRDTDSQGNCRGDKVAEG). Over residues 183 to 205 (GEWRANRDTDSQGNCRGDKVAEG) the composition is skewed to basic and acidic residues.

Belongs to the MoaE family. MOCS2B subfamily. Heterotetramer; composed of 2 small (MOCS2A) and 2 large (MOCS2B) subunits.

The protein localises to the cytoplasm. The enzyme catalyses 2 [molybdopterin-synthase sulfur-carrier protein]-C-terminal-Gly-aminoethanethioate + cyclic pyranopterin phosphate + H2O = molybdopterin + 2 [molybdopterin-synthase sulfur-carrier protein]-C-terminal Gly-Gly + 2 H(+). It functions in the pathway cofactor biosynthesis; molybdopterin biosynthesis. Its function is as follows. Catalytic subunit of the molybdopterin synthase complex, a complex that catalyzes the conversion of precursor Z into molybdopterin. Acts by mediating the incorporation of 2 sulfur atoms from thiocarboxylated MOCS2A into precursor Z to generate a dithiolene group. This chain is Molybdopterin synthase catalytic subunit, found in Ajellomyces capsulatus (strain NAm1 / WU24) (Darling's disease fungus).